Consider the following 840-residue polypeptide: Multifunctional non-homologous end joining protein LigD (840 aa).

The interval 1 to 32 is disordered; the sequence is MPSSKPLAEYARKRDFRQTPEPSGRKPRKDST. Residues 7–162 form a 3'-phosphoesterase domain (PE) region; that stretch reads LAEYARKRDF…SQWFLVKAKD (156 aa). Residues His-42, His-48, and Asp-50 each contribute to the Mn(2+) site. Residues 189-211 form a disordered region; the sequence is PRHGEAATPAARPARRGKSGGKT. The tract at residues 219–521 is ligase domain (Lig); the sequence is PELASLVEQP…REDKPAREVT (303 aa). Catalysis depends on Lys-238, which acts as the N6-AMP-lysine intermediate. Mn(2+) is bound by residues Asp-240 and Glu-376. A disordered region spans residues 514-546; that stretch reads DKPAREVTGERPAGPPPLRGARKASAGASRAAT. Residues 536 to 546 are compositionally biased toward low complexity; the sequence is KASAGASRAAT. Positions 549–793 are DNA repair polymerase domain (Pol); it reads VRISHPQRLI…SVPVFREELD (245 aa). Residues Phe-604 and His-651 each contribute to the ATP site. Residues Asp-669 and Asp-671 each contribute to the Mn(2+) site. ATP-binding positions include Asp-671 and 704 to 710; that span reads SGGKGMH. Asp-759 serves as a coordination point for Mn(2+). ATP is bound by residues Ser-768 and 776-778; that span reads RAR.

The protein in the N-terminal section; belongs to the LigD 3'-phosphoesterase family. In the central section; belongs to the ATP-dependent DNA ligase family. It in the C-terminal section; belongs to the LigD polymerase family. Monomer. Interacts with Ku. Requires Mn(2+) as cofactor.

The catalysed reaction is ATP + (deoxyribonucleotide)n-3'-hydroxyl + 5'-phospho-(deoxyribonucleotide)m = (deoxyribonucleotide)n+m + AMP + diphosphate.. Its activity is regulated as follows. rNTP addition and end joining activities are stimulated by Ku homodimer. Its function is as follows. With Ku probably forms a non-homologous end joining (NHEJ) repair enzyme, which repairs dsDNA breaks (DSB) with reduced fidelity. Acts as a DNA ligase on singly nicked dsDNA, fills dsDNA gaps (3- or 4- nucleotide gaps, prefers a 5'-phosphate at the gap distal end, prefers dNTPs over rNTPs), has DNA-directed DNA polymerase activity (templated primer extension) and DNA-directed RNA polymerase activity, adds 1 or 2 non-templated rNTP (or less well dNTP) to ssDNA or blunt-end dsDNA (primer extension). Has 3' resection activity, removing 3'-rNMPs from DNA using its 3'-ribonuclease and 3'-phosphatase activities sequentially. Resection requires a 2'-OH in the penultimate nucleoside position (i.e. a ribo- not deoxyribonucleoside), although the 3'-phosphatase activity does not, and its specific activity is 16-fold higher on a DNA substrate. On appropriate substrates will extend a DNA primer to the end of the template strand and then incorporate a non-templated nucleotide. The preference of the polymerase domain for rNTPs over dNTPs may be advantageous in quiescent cells where the dNTP pool may be limiting. This is Multifunctional non-homologous end joining protein LigD (ligD) from Pseudomonas aeruginosa (strain ATCC 15692 / DSM 22644 / CIP 104116 / JCM 14847 / LMG 12228 / 1C / PRS 101 / PAO1).